The primary structure comprises 195 residues: Small ribosomal subunit protein bS16 (195 aa).

The segment covering 171–181 (PEAPVAAAEPA) has biased composition (low complexity). Residues 171 to 195 (PEAPVAAAEPAPEVKAEEKEEGGEA) form a disordered region.

It belongs to the bacterial ribosomal protein bS16 family.

In Chlorobium luteolum (strain DSM 273 / BCRC 81028 / 2530) (Pelodictyon luteolum), this protein is Small ribosomal subunit protein bS16.